We begin with the raw amino-acid sequence, 522 residues long: Maturase K (522 aa).

Belongs to the intron maturase 2 family. MatK subfamily.

Its subcellular location is the plastid. It localises to the chloroplast. Its function is as follows. Usually encoded in the trnK tRNA gene intron. Probably assists in splicing its own and other chloroplast group II introns. The protein is Maturase K of Iris danfordiae (Danford iris).